The chain runs to 418 residues: AP-3 complex subunit mu-2 (418 aa).

The 242-residue stretch at 176–417 (NNEAYFDVVE…MTKAGKFQVR (242 aa)) folds into the MHD domain.

It belongs to the adaptor complexes medium subunit family. Adaptor protein complex 3 (AP-3) is a heterotetramer composed of two large adaptins (delta-type subunit AP3D1 and beta-type subunit AP3B1 or AP3B2), a medium adaptin (mu-type subunit AP3M1 or AP3M2) and a small adaptin (sigma-type subunit APS1 or AP3S2). AP-3 associates with the BLOC-1 complex.

The protein localises to the golgi apparatus. Its subcellular location is the cytoplasmic vesicle membrane. Functionally, component of the adaptor complexes which link clathrin to receptors in coated vesicles. Clathrin-associated protein complexes are believed to interact with the cytoplasmic tails of membrane proteins, leading to their selection and concentration. Ap47 is a subunit of the plasma membrane adaptor. In concert with the BLOC-1 complex, AP-3 is required to target cargos into vesicles assembled at cell bodies for delivery into neurites and nerve terminals. The chain is AP-3 complex subunit mu-2 (Ap3m2) from Mus musculus (Mouse).